Here is a 1295-residue protein sequence, read N- to C-terminus: DNA-directed RNA polymerase subunit beta' (1295 aa).

C60, C62, C75, and C78 together coordinate Zn(2+). Residues D516, D518, and D520 each contribute to the Mg(2+) site. Residues C841, C914, C921, and C924 each coordinate Zn(2+).

The protein belongs to the RNA polymerase beta' chain family. In terms of assembly, the RNAP catalytic core consists of 2 alpha, 1 beta, 1 beta' and 1 omega subunit. When a sigma factor is associated with the core the holoenzyme is formed, which can initiate transcription. The cofactor is Mg(2+). It depends on Zn(2+) as a cofactor.

The catalysed reaction is RNA(n) + a ribonucleoside 5'-triphosphate = RNA(n+1) + diphosphate. Its function is as follows. DNA-dependent RNA polymerase catalyzes the transcription of DNA into RNA using the four ribonucleoside triphosphates as substrates. This chain is DNA-directed RNA polymerase subunit beta', found in Dehalococcoides mccartyi (strain ATCC BAA-2266 / KCTC 15142 / 195) (Dehalococcoides ethenogenes (strain 195)).